The primary structure comprises 127 residues: Small ribosomal subunit protein uS12m (127 aa).

It belongs to the universal ribosomal protein uS12 family.

The protein localises to the mitochondrion. The polypeptide is Small ribosomal subunit protein uS12m (RPS12) (Acanthamoeba castellanii (Amoeba)).